We begin with the raw amino-acid sequence, 214 residues long: ATP-dependent dethiobiotin synthetase BioD (214 aa).

Position 10-15 (glycine 10–tyrosine 15) interacts with ATP. Threonine 14 is a binding site for Mg(2+). Residue lysine 35 is part of the active site. Position 39 (threonine 39) interacts with substrate. ATP-binding positions include aspartate 44, glutamate 109 to glycine 112, and asparagine 169 to cysteine 170. Mg(2+) is bound by residues aspartate 44 and glutamate 109.

This sequence belongs to the dethiobiotin synthetase family. In terms of assembly, homodimer. Mg(2+) is required as a cofactor.

Its subcellular location is the cytoplasm. It carries out the reaction (7R,8S)-7,8-diammoniononanoate + CO2 + ATP = (4R,5S)-dethiobiotin + ADP + phosphate + 3 H(+). It participates in cofactor biosynthesis; biotin biosynthesis; biotin from 7,8-diaminononanoate: step 1/2. Catalyzes a mechanistically unusual reaction, the ATP-dependent insertion of CO2 between the N7 and N8 nitrogen atoms of 7,8-diaminopelargonic acid (DAPA, also called 7,8-diammoniononanoate) to form a ureido ring. In Methanocaldococcus jannaschii (strain ATCC 43067 / DSM 2661 / JAL-1 / JCM 10045 / NBRC 100440) (Methanococcus jannaschii), this protein is ATP-dependent dethiobiotin synthetase BioD.